A 188-amino-acid chain; its full sequence is Elongation factor P (188 aa).

Belongs to the elongation factor P family.

It localises to the cytoplasm. It functions in the pathway protein biosynthesis; polypeptide chain elongation. Functionally, involved in peptide bond synthesis. Stimulates efficient translation and peptide-bond synthesis on native or reconstituted 70S ribosomes in vitro. Probably functions indirectly by altering the affinity of the ribosome for aminoacyl-tRNA, thus increasing their reactivity as acceptors for peptidyl transferase. The chain is Elongation factor P from Bradyrhizobium sp. (strain BTAi1 / ATCC BAA-1182).